Here is a 1882-residue protein sequence, read N- to C-terminus: RNA2 polyprotein (1882 aa).

Repeat copies occupy residues 554 to 606 and 607 to 659. Residues 554–698 form a 2.5 X tandem repeats, Pro-rich region; the sequence is SWSSPLPLFA…VSDEFMDVLP (145 aa). The stretch at 660–698 is one 3; truncated and approximate repeat; the sequence is SWSSPLPLFASFKVNRGACFLQVLPARKVVSDEFMDVLP. Composition is skewed to polar residues over residues 1289–1303 and 1838–1847; these read SSLF…QQGT and PSATLGTNNP. 2 disordered regions span residues 1289–1320 and 1838–1863; these read SSLF…SSVQ and PSAT…PGGQ.

The protein belongs to the nepoviruses RNA2 polyprotein family. Post-translationally, specific enzymatic cleavages in vivo by the P1 encoded 3C-like protease yield mature proteins.

The protein localises to the host cell junction. The protein resides in the host plasmodesma. It is found in the virion. In terms of biological role, protein 2A: implicated in RNA2 replication. Could also be required for nematode transmission of the virus. Functionally, transports viral genome to neighboring plant cells directly through plasmosdesmata, without any budding. The movement protein allows efficient cell to cell propagation, by bypassing the host cell wall barrier. Acts by forming a tubular structure at the host plasmodesmata, enlarging it enough to allow free passage of virion capsids. The chain is RNA2 polyprotein from Tomato ringspot virus (isolate raspberry) (ToRSV).